Here is a 215-residue protein sequence, read N- to C-terminus: MGCYSMGFVGRKAGMSRVFLEDGCSIPVTLIEATANRVVQIKTSDVDGYDAVQVTVGSRRSVLVNKPESGHFAKAKVEAGRGLWEFRVEKTQLGSYSVGSEVGLSIFAVGQKVDIQGITKGKGFQGTIKRHNFRMGDATHGNSLSHRAPGSLGQRQTPGRVFPGKKMSGHMGAVKQSVQNLEVIKIDVERCLIAVRGAIPGASGGDVLIRSASKI.

Residue Q156 is modified to N5-methylglutamine.

This sequence belongs to the universal ribosomal protein uL3 family. In terms of assembly, part of the 50S ribosomal subunit. Forms a cluster with proteins L14 and L19. In terms of processing, methylated by PrmB.

Its function is as follows. One of the primary rRNA binding proteins, it binds directly near the 3'-end of the 23S rRNA, where it nucleates assembly of the 50S subunit. The protein is Large ribosomal subunit protein uL3 of Xylella fastidiosa (strain M23).